Here is a 199-residue protein sequence, read N- to C-terminus: GTP cyclohydrolase-2 (199 aa).

Position 49 to 53 (49 to 53 (RVHSE)) interacts with GTP. Residues Cys54, Cys65, and Cys67 each coordinate Zn(2+). Residues Gln70, 92-94 (EGR), and Thr114 each bind GTP. Asp126 (proton acceptor) is an active-site residue. Arg128 functions as the Nucleophile in the catalytic mechanism. Thr149 and Lys154 together coordinate GTP.

The protein belongs to the GTP cyclohydrolase II family. Requires Zn(2+) as cofactor.

It carries out the reaction GTP + 4 H2O = 2,5-diamino-6-hydroxy-4-(5-phosphoribosylamino)-pyrimidine + formate + 2 phosphate + 3 H(+). It participates in cofactor biosynthesis; riboflavin biosynthesis; 5-amino-6-(D-ribitylamino)uracil from GTP: step 1/4. Functionally, catalyzes the conversion of GTP to 2,5-diamino-6-ribosylamino-4(3H)-pyrimidinone 5'-phosphate (DARP), formate and pyrophosphate. The protein is GTP cyclohydrolase-2 of Baumannia cicadellinicola subsp. Homalodisca coagulata.